The following is a 488-amino-acid chain: Gamma-aminobutyric acid receptor subunit beta-4 (488 aa).

The first 25 residues, 1 to 25, serve as a signal peptide directing secretion; that stretch reads MWTFQADRLSGIVSALAALCVACCA. The Extracellular portion of the chain corresponds to 26–244; that stretch reads QSPSTGNISV…SFRIKRNIGY (219 aa). N-linked (GlcNAc...) asparagine glycans are attached at residues Asn32, Asn104, Asn173, and Asn195. Cysteines 160 and 174 form a disulfide. The next 3 membrane-spanning stretches (helical) occupy residues 245-266, 271-292, and 304-326; these read FILQ…SFWI, SAAR…NTHL, and AIDV…YAFV. Residues 327–465 are Cytoplasmic-facing; it reads NYIFFGRGPR…DLTDVSTIDK (139 aa). A helical transmembrane segment spans residues 466 to 487; the sequence is WSRIIFPITFGFFNLVYWLYYV.

It belongs to the ligand-gated ion channel (TC 1.A.9) family. Gamma-aminobutyric acid receptor (TC 1.A.9.5) subfamily. GABRB4 sub-subfamily. As to quaternary structure, generally pentameric. There are five types of GABA(A) receptor chains: alpha, beta, gamma, delta, and rho.

The protein resides in the postsynaptic cell membrane. The protein localises to the cell membrane. Its function is as follows. GABA, the major inhibitory neurotransmitter in the vertebrate brain, mediates neuronal inhibition by binding to the GABA/benzodiazepine receptor and opening an integral chloride channel. The polypeptide is Gamma-aminobutyric acid receptor subunit beta-4 (GABRB4) (Gallus gallus (Chicken)).